The primary structure comprises 245 residues: Ribonuclease PH (245 aa).

Residues arginine 86 and 124–126 each bind phosphate; that span reads GTR.

It belongs to the RNase PH family. Homohexameric ring arranged as a trimer of dimers.

It catalyses the reaction tRNA(n+1) + phosphate = tRNA(n) + a ribonucleoside 5'-diphosphate. In terms of biological role, phosphorolytic 3'-5' exoribonuclease that plays an important role in tRNA 3'-end maturation. Removes nucleotide residues following the 3'-CCA terminus of tRNAs; can also add nucleotides to the ends of RNA molecules by using nucleoside diphosphates as substrates, but this may not be physiologically important. Probably plays a role in initiation of 16S rRNA degradation (leading to ribosome degradation) during starvation. In Bacillus mycoides (strain KBAB4) (Bacillus weihenstephanensis), this protein is Ribonuclease PH.